The primary structure comprises 93 residues: Stromal cell-derived factor 1 (93 aa).

The first 21 residues, 1–21 (MDIRTLALFSILLGSLCLSEG), serve as a signal peptide directing secretion. A Receptor activation motif motif is present at residues 22 to 23 (KP). The segment at 29–33 (RCPCR) is receptor and heparin binding. 2 disulfides stabilise this stretch: Cys-30/Cys-55 and Cys-32/Cys-71. Heparin-binding positions include 41 to 51 (KSNIKHLKILS), Arg-62, Gln-69, and Lys-85. 2 receptor binding regions span residues 48 to 50 (KIL) and 60 to 64 (VARLK).

The protein belongs to the intercrine alpha (chemokine CxC) family. As to quaternary structure, monomer or homodimer; in equilibrium. Dimer formation is induced by non acidic pH and the presence of multivalent anions, and by binding to cxcr4 or heparin.

Its subcellular location is the secreted. Functionally, chemoattractant. Activates the C-X-C chemokine receptor cxcr4 to induce a rapid and transient rise in the level of intracellular calcium ions, and chemotaxis. Signaling with cxcr4 mediates the directional movement of mesodermal cells during gastrulation. Binds to the allosteric site (site 2) of integrins and activates them in a cxcr4-independent manner. This chain is Stromal cell-derived factor 1, found in Xenopus tropicalis (Western clawed frog).